The following is a 173-amino-acid chain: Small ribosomal subunit protein uS5 (173 aa).

One can recognise an S5 DRBM domain in the interval 18 to 81 (LREKMIAVNR…EQARRGMFKV (64 aa)).

It belongs to the universal ribosomal protein uS5 family. In terms of assembly, part of the 30S ribosomal subunit. Contacts proteins S4 and S8.

Functionally, with S4 and S12 plays an important role in translational accuracy. In terms of biological role, located at the back of the 30S subunit body where it stabilizes the conformation of the head with respect to the body. The chain is Small ribosomal subunit protein uS5 from Bordetella petrii (strain ATCC BAA-461 / DSM 12804 / CCUG 43448).